Consider the following 378-residue polypeptide: Beta-1,3-galactosyltransferase pvg3 (378 aa).

At M1–K8 the chain is on the cytoplasmic side. Residues I9–N29 form a helical; Signal-anchor for type II membrane protein membrane-spanning segment. Residues R30–V378 are Lumenal-facing. N-linked (GlcNAc...) asparagine glycans are attached at residues N53, N97, N180, and N354.

It belongs to the glycosyltransferase 31 family.

The protein localises to the endoplasmic reticulum membrane. It localises to the golgi apparatus. Its subcellular location is the golgi stack membrane. It carries out the reaction 3-O-(beta-D-galactosyl-(1-&gt;4)-beta-D-xylosyl)-L-seryl-[protein] + UDP-alpha-D-galactose = 3-O-(beta-D-galactosyl-(1-&gt;3)-beta-D-galactosyl-(1-&gt;4)-beta-D-xylosyl)-L-seryl-[protein] + UDP + H(+). Its function is as follows. Involved in cell wall biogenesis. Has a role in the addition of Gal-beta1,3 moeities to galactomannans and their subsequent pyruvylation. Has a role in meiosis. The sequence is that of Beta-1,3-galactosyltransferase pvg3 (pvg3) from Schizosaccharomyces pombe (strain 972 / ATCC 24843) (Fission yeast).